The following is a 1008-amino-acid chain: PAN2-PAN3 deadenylation complex catalytic subunit PAN2 (1008 aa).

5 WD repeats span residues 29–68 (GQLTDTLPLTFDLAEDLVWAGDTNGIVSSYYGETLQPYSR), 110–149 (PSLGNNLCMTFTHGPTEFVVGGNPGKLVVVNSERGDVTRV), 158–198 (HMAG…FSDV), 200–236 (VQDNVVMTCGFSAASTGHRIDPLIKVWDLRMMRAMAP), and 277–316 (AEVALVNGVKLSPRGHHFVVSDTSGQLQLWSDEPQSSFAE). The segment at 314–449 (FAEFSAPTAF…TCTEASMSSK (136 aa)) is linker. Residues 450 to 755 (KVPRLYRKLE…RTVMMVYAVG (306 aa)) enclose the USP domain. Residues 808–976 (AIDAEFVVLK…EDSHTALLLY (169 aa)) form the Exonuclease domain. Residues aspartate 810, glutamate 812, aspartate 915, and aspartate 968 each contribute to the a divalent metal cation site.

It belongs to the peptidase C19 family. PAN2 subfamily. In terms of assembly, forms a heterotrimer with an asymmetric homodimer of the regulatory subunit PAN3 to form the poly(A)-nuclease (PAN) deadenylation complex. A divalent metal cation is required as a cofactor.

The protein localises to the cytoplasm. The enzyme catalyses Exonucleolytic cleavage of poly(A) to 5'-AMP.. With respect to regulation, positively regulated by the regulatory subunit PAN3. In terms of biological role, catalytic subunit of the poly(A)-nuclease (PAN) deadenylation complex, one of two cytoplasmic mRNA deadenylases involved in mRNA turnover. PAN specifically shortens poly(A) tails of RNA and the activity is stimulated by poly(A)-binding protein PAB1. PAN deadenylation is followed by rapid degradation of the shortened mRNA tails by the CCR4-NOT complex. Deadenylated mRNAs are then degraded by two alternative mechanisms, namely exosome-mediated 3'-5' exonucleolytic degradation, or deadenylation-dependent mRNA decaping and subsequent 5'-3' exonucleolytic degradation by XRN1. May also be involved in post-transcriptional maturation of mRNA poly(A) tails. The chain is PAN2-PAN3 deadenylation complex catalytic subunit PAN2 from Yarrowia lipolytica (strain CLIB 122 / E 150) (Yeast).